We begin with the raw amino-acid sequence, 382 residues long: Mannitol-1-phosphate 5-dehydrogenase (382 aa).

An NAD(+)-binding site is contributed by 3 to 14; that stretch reads ALHFGAGNIGRG.

Belongs to the mannitol dehydrogenase family.

It catalyses the reaction D-mannitol 1-phosphate + NAD(+) = beta-D-fructose 6-phosphate + NADH + H(+). The polypeptide is Mannitol-1-phosphate 5-dehydrogenase (Erwinia tasmaniensis (strain DSM 17950 / CFBP 7177 / CIP 109463 / NCPPB 4357 / Et1/99)).